A 276-amino-acid polypeptide reads, in one-letter code: Large ribosomal subunit protein uL2 (276 aa).

Disordered stretches follow at residues 36–58 (PLHKKGGRNNQGKMTVRHQGGGH) and 214–276 (LGKR…RRKK).

It belongs to the universal ribosomal protein uL2 family. As to quaternary structure, part of the 50S ribosomal subunit. Forms a bridge to the 30S subunit in the 70S ribosome.

One of the primary rRNA binding proteins. Required for association of the 30S and 50S subunits to form the 70S ribosome, for tRNA binding and peptide bond formation. It has been suggested to have peptidyltransferase activity; this is somewhat controversial. Makes several contacts with the 16S rRNA in the 70S ribosome. The chain is Large ribosomal subunit protein uL2 from Halalkalibacterium halodurans (strain ATCC BAA-125 / DSM 18197 / FERM 7344 / JCM 9153 / C-125) (Bacillus halodurans).